Consider the following 144-residue polypeptide: Large ribosomal subunit protein uL15 (144 aa).

Positions 1 to 62 are disordered; it reads MELNNLKPAE…GQMPLQRRLP (62 aa). Positions 21–31 are enriched in gly residues; that stretch reads RGIGSGLGKTA.

The protein belongs to the universal ribosomal protein uL15 family. In terms of assembly, part of the 50S ribosomal subunit.

Its function is as follows. Binds to the 23S rRNA. The protein is Large ribosomal subunit protein uL15 of Paraburkholderia phymatum (strain DSM 17167 / CIP 108236 / LMG 21445 / STM815) (Burkholderia phymatum).